A 358-amino-acid polypeptide reads, in one-letter code: 2-oxoisovalerate dehydrogenase subunit beta 2, mitochondrial (358 aa).

A mitochondrion-targeting transit peptide spans 1 to 16; that stretch reads MAAALVRRFCRGSSFP. Thiamine diphosphate is bound at residue tyrosine 119. K(+)-binding residues include glycine 145, leucine 147, threonine 148, aspartate 198, and asparagine 200.

As to quaternary structure, heterotetramer of alpha and beta chains. Thiamine diphosphate serves as cofactor. As to expression, expressed in the non-photosynthetic organs such as siliques, flowers and roots.

The protein resides in the mitochondrion matrix. It carries out the reaction N(6)-[(R)-lipoyl]-L-lysyl-[protein] + 3-methyl-2-oxobutanoate + H(+) = N(6)-[(R)-S(8)-2-methylpropanoyldihydrolipoyl]-L-lysyl-[protein] + CO2. In terms of biological role, the branched-chain alpha-keto dehydrogenase complex catalyzes the overall conversion of alpha-keto acids to acyl-CoA and CO(2). It contains multiple copies of three enzymatic components: branched-chain alpha-keto acid decarboxylase (E1), lipoamide acyltransferase (E2) and lipoamide dehydrogenase (E3). Required during sugar starvation and acts under the control of a sugar-sensing mechanism involving Ser/Thr kinases and phosphatases. The protein is 2-oxoisovalerate dehydrogenase subunit beta 2, mitochondrial (DIN4) of Arabidopsis thaliana (Mouse-ear cress).